The sequence spans 1488 residues: Chromosome partition protein MukB (1488 aa).

Residue 34–41 coordinates ATP; the sequence is GGNGAGKS. 3 coiled-coil regions span residues 326-418, 444-472, and 509-602; these read LEAD…QYNQ, LDTF…QTAH, and RHLA…QRAP. Residues 666–783 form a flexible hinge region; sequence PGGAEDQRLN…SLPIFGRAAR (118 aa). Coiled coils occupy residues 835-923, 977-1116, and 1209-1265; these read EAEI…AKLE, EMLS…AKAG, and VEAI…LQSV. The interval 1049–1074 is disordered; the sequence is ADSGAEERARQRRDELHAQLSNNRSR. The segment covering 1051 to 1065 has biased composition (basic and acidic residues); the sequence is SGAEERARQRRDELH.

Belongs to the SMC family. MukB subfamily. As to quaternary structure, homodimerization via its hinge domain. Binds to DNA via its C-terminal region. Interacts, and probably forms a ternary complex, with MukE and MukF via its C-terminal region. The complex formation is stimulated by calcium or magnesium. Interacts with tubulin-related protein FtsZ.

It localises to the cytoplasm. Its subcellular location is the nucleoid. In terms of biological role, plays a central role in chromosome condensation, segregation and cell cycle progression. Functions as a homodimer, which is essential for chromosome partition. Involved in negative DNA supercoiling in vivo, and by this means organize and compact chromosomes. May achieve or facilitate chromosome segregation by condensation DNA from both sides of a centrally located replisome during cell division. This is Chromosome partition protein MukB from Salmonella schwarzengrund (strain CVM19633).